A 135-amino-acid chain; its full sequence is Large-conductance mechanosensitive channel (135 aa).

A run of 2 helical transmembrane segments spans residues 10–30 and 76–96; these read FAMKGNVVDMAVGVIIGAAFG and GAFIQTVFDFAIVAFAIFCAI.

It belongs to the MscL family. Homopentamer.

The protein resides in the cell inner membrane. Channel that opens in response to stretch forces in the membrane lipid bilayer. May participate in the regulation of osmotic pressure changes within the cell. The protein is Large-conductance mechanosensitive channel of Proteus mirabilis (strain HI4320).